We begin with the raw amino-acid sequence, 290 residues long: Ribosomal RNA small subunit methyltransferase A (290 aa).

S-adenosyl-L-methionine contacts are provided by Asn-27, Leu-29, Gly-54, Glu-75, Asp-100, and Asn-125.

The protein belongs to the class I-like SAM-binding methyltransferase superfamily. rRNA adenine N(6)-methyltransferase family. RsmA subfamily.

Its subcellular location is the cytoplasm. It carries out the reaction adenosine(1518)/adenosine(1519) in 16S rRNA + 4 S-adenosyl-L-methionine = N(6)-dimethyladenosine(1518)/N(6)-dimethyladenosine(1519) in 16S rRNA + 4 S-adenosyl-L-homocysteine + 4 H(+). Specifically dimethylates two adjacent adenosines (A1518 and A1519) in the loop of a conserved hairpin near the 3'-end of 16S rRNA in the 30S particle. May play a critical role in biogenesis of 30S subunits. The polypeptide is Ribosomal RNA small subunit methyltransferase A (Streptococcus pneumoniae (strain CGSP14)).